A 439-amino-acid polypeptide reads, in one-letter code: GTPase Der (439 aa).

2 EngA-type G domains span residues 3 to 167 and 176 to 351; these read PLVA…PKSS and TRIA…AQYS. GTP is bound by residues 9-16, 56-60, 119-122, 182-189, 229-233, and 294-297; these read GRPNVGKS, DTGGF, NKVD, DTAGI, and NKWD. Residues 352–436 enclose the KH-like domain; the sequence is KRVSTSDLNR…PLKIIFRGRD (85 aa).

Belongs to the TRAFAC class TrmE-Era-EngA-EngB-Septin-like GTPase superfamily. EngA (Der) GTPase family. Associates with the 50S ribosomal subunit.

Functionally, GTPase that plays an essential role in the late steps of ribosome biogenesis. The protein is GTPase Der of Geobacter metallireducens (strain ATCC 53774 / DSM 7210 / GS-15).